The sequence spans 201 residues: Holliday junction branch migration complex subunit RuvA (201 aa).

Positions 1–63 (MYDYIKGTVT…EDNISLFGFQ (63 aa)) are domain I. A domain II region spans residues 64 to 142 (TTEERYLFKK…DVVASEIVYV (79 aa)). Residues 143–153 (APENDMVAGLS) form a flexible linker region. Residues 153 to 201 (SPQLEEAVLALEALGYSTRELKKVIPKLAKEEDLTSDAYIKLALQLMTK) form a domain III region.

This sequence belongs to the RuvA family. In terms of assembly, homotetramer. Forms an RuvA(8)-RuvB(12)-Holliday junction (HJ) complex. HJ DNA is sandwiched between 2 RuvA tetramers; dsDNA enters through RuvA and exits via RuvB. An RuvB hexamer assembles on each DNA strand where it exits the tetramer. Each RuvB hexamer is contacted by two RuvA subunits (via domain III) on 2 adjacent RuvB subunits; this complex drives branch migration. In the full resolvosome a probable DNA-RuvA(4)-RuvB(12)-RuvC(2) complex forms which resolves the HJ.

It is found in the cytoplasm. Its function is as follows. The RuvA-RuvB-RuvC complex processes Holliday junction (HJ) DNA during genetic recombination and DNA repair, while the RuvA-RuvB complex plays an important role in the rescue of blocked DNA replication forks via replication fork reversal (RFR). RuvA specifically binds to HJ cruciform DNA, conferring on it an open structure. The RuvB hexamer acts as an ATP-dependent pump, pulling dsDNA into and through the RuvAB complex. HJ branch migration allows RuvC to scan DNA until it finds its consensus sequence, where it cleaves and resolves the cruciform DNA. The chain is Holliday junction branch migration complex subunit RuvA from Listeria monocytogenes serotype 4a (strain HCC23).